The sequence spans 896 residues: Alanine--tRNA ligase (896 aa).

Zn(2+)-binding residues include histidine 580, histidine 584, cysteine 683, and histidine 687.

Belongs to the class-II aminoacyl-tRNA synthetase family. Zn(2+) is required as a cofactor.

The protein localises to the cytoplasm. It catalyses the reaction tRNA(Ala) + L-alanine + ATP = L-alanyl-tRNA(Ala) + AMP + diphosphate. Functionally, catalyzes the attachment of alanine to tRNA(Ala) in a two-step reaction: alanine is first activated by ATP to form Ala-AMP and then transferred to the acceptor end of tRNA(Ala). Also edits incorrectly charged Ser-tRNA(Ala) and Gly-tRNA(Ala) via its editing domain. In Mycolicibacterium smegmatis (strain ATCC 700084 / mc(2)155) (Mycobacterium smegmatis), this protein is Alanine--tRNA ligase.